The chain runs to 404 residues: uncharacterized protein (404 aa).

An N-terminal signal peptide occupies residues 1–21; it reads MRKLGLALSIMGLLLVSIVAG. C22 is subject to N-acetylcysteine. C22 is lipidated: S-archaeol cysteine.

It belongs to the BMP lipoprotein family.

It localises to the cell membrane. This is an uncharacterized protein from Pyrococcus abyssi (strain GE5 / Orsay).